A 402-amino-acid polypeptide reads, in one-letter code: Probable peptidoglycan glycosyltransferase FtsW (402 aa).

The Cytoplasmic portion of the chain corresponds to 1 to 24 (MLYRLKLLLSGQNTKKERVRAKLE). The helical transmembrane segment at 25–45 (IDISIVFVMLGLLIFGWVMVT) threads the bilayer. Residues 46–63 (SASMVVALDDYNNPYFYS) lie on the Periplasmic side of the membrane. A helical transmembrane segment spans residues 64–84 (IRQGFFAVIAIFLFLLALLVP). At 85 to 91 (TKNYEKN) the chain is on the cytoplasmic side. Residues 92 to 112 (YNAFFFIMLIVLVAVLVPGVG) traverse the membrane as a helical segment. At 113–121 (KSVNGARRW) the chain is on the periplasmic side. Residues 122 to 142 (IPLIIINIQVAELAKLLAIIF) form a helical membrane-spanning segment. Residues 143-160 (FSGYIAENLPKMTNFKEG) lie on the Cytoplasmic side of the membrane. The next 2 helical transmembrane spans lie at 161–181 (ILTP…QPDF) and 182–202 (GSTV…GNKV). Residue Arg-203 is a topological domain, cytoplasmic. The helical transmembrane segment at 204–224 (WYGLLIGAMLIMATMLVIISP) threads the bilayer. Residues 225–284 (YRMHRITGFLHPWENANGSGYQLVQALIGFGRGGWFGDGLGNGVQKQFFLPEAHTDFITS) lie on the Periplasmic side of the membrane. The helical transmembrane segment at 285-305 (VIAEEIGVIGLMILLMVYLFI) threads the bilayer. The Cytoplasmic portion of the chain corresponds to 306–324 (VFRAMNIAKMAFELKRYYQ). Residues 325–345 (AFLSYGISFWIGFQVFVNIGV) traverse the membrane as a helical segment. The Periplasmic segment spans residues 346–357 (NTGLLPTKGLTL). The helical transmembrane segment at 358-378 (PLISYGGSSLLIMCFTLGILV) threads the bilayer. Residues 379-402 (RVDFENKLLADTINPKYIYKKVRK) are Cytoplasmic-facing.

The protein belongs to the SEDS family. FtsW subfamily.

It is found in the cell inner membrane. It carries out the reaction [GlcNAc-(1-&gt;4)-Mur2Ac(oyl-L-Ala-gamma-D-Glu-L-Lys-D-Ala-D-Ala)](n)-di-trans,octa-cis-undecaprenyl diphosphate + beta-D-GlcNAc-(1-&gt;4)-Mur2Ac(oyl-L-Ala-gamma-D-Glu-L-Lys-D-Ala-D-Ala)-di-trans,octa-cis-undecaprenyl diphosphate = [GlcNAc-(1-&gt;4)-Mur2Ac(oyl-L-Ala-gamma-D-Glu-L-Lys-D-Ala-D-Ala)](n+1)-di-trans,octa-cis-undecaprenyl diphosphate + di-trans,octa-cis-undecaprenyl diphosphate + H(+). The protein operates within cell wall biogenesis; peptidoglycan biosynthesis. Its function is as follows. Peptidoglycan polymerase that is essential for cell division. The protein is Probable peptidoglycan glycosyltransferase FtsW of Francisella salina.